A 212-amino-acid polypeptide reads, in one-letter code: 3-oxo-tetronate 4-phosphate decarboxylase (212 aa).

E79 acts as the Proton acceptor in catalysis. Residues E79, H98, and H100 each coordinate Zn(2+). Catalysis depends on Y125, which acts as the Proton donor. H165 is a Zn(2+) binding site.

The protein belongs to the aldolase class II family. AraD/FucA subfamily. Requires Zn(2+) as cofactor.

It carries out the reaction 3-dehydro-4-O-phospho-D-erythronate + H(+) = dihydroxyacetone phosphate + CO2. It catalyses the reaction 3-dehydro-4-O-phospho-L-erythronate + H(+) = dihydroxyacetone phosphate + CO2. Catalyzes the decarboxylation of 3-oxo-tetronate 4-phosphate to dihydroxyacetone phosphate (DHAP) and CO(2). The protein is 3-oxo-tetronate 4-phosphate decarboxylase of Escherichia coli O6:H1 (strain CFT073 / ATCC 700928 / UPEC).